The chain runs to 492 residues: ATP synthase subunit beta, chloroplastic (492 aa).

Position 170-177 (170-177 (GGAGVGKT)) interacts with ATP.

The protein belongs to the ATPase alpha/beta chains family. As to quaternary structure, F-type ATPases have 2 components, CF(1) - the catalytic core - and CF(0) - the membrane proton channel. CF(1) has five subunits: alpha(3), beta(3), gamma(1), delta(1), epsilon(1). CF(0) has four main subunits: a(1), b(1), b'(1) and c(9-12).

Its subcellular location is the plastid. It localises to the chloroplast thylakoid membrane. The enzyme catalyses ATP + H2O + 4 H(+)(in) = ADP + phosphate + 5 H(+)(out). Its function is as follows. Produces ATP from ADP in the presence of a proton gradient across the membrane. The catalytic sites are hosted primarily by the beta subunits. The protein is ATP synthase subunit beta, chloroplastic of Huperzia lucidula (Shining clubmoss).